The primary structure comprises 130 residues: Large ribosomal subunit protein bL21 (130 aa).

The interval 110–130 (KTAAQPAADEAVAANEVDSEA) is disordered. A compositionally biased stretch (low complexity) spans 112 to 130 (AAQPAADEAVAANEVDSEA).

This sequence belongs to the bacterial ribosomal protein bL21 family. As to quaternary structure, part of the 50S ribosomal subunit. Contacts protein L20.

This protein binds to 23S rRNA in the presence of protein L20. This Cyanothece sp. (strain PCC 7425 / ATCC 29141) protein is Large ribosomal subunit protein bL21.